Consider the following 404-residue polypeptide: Putative gustatory receptor 94a (404 aa).

The Cytoplasmic segment spans residues 1–11 (MDFTSDYAHRR). A helical transmembrane segment spans residues 12 to 32 (MVKFLTIILIGFMTVFGLLAN). The Extracellular portion of the chain corresponds to 33–43 (RYRAGRRERFR). The chain crosses the membrane as a helical span at residues 44–64 (FSKANLAFASLWAIAFSLVYG). Topologically, residues 65 to 133 (RQIYKEYQEG…RLDSRSLYIS (69 aa)) are cytoplasmic. Residues 134 to 154 (IVLALVKTVAFPLTIEVAFIL) traverse the membrane as a helical segment. Topologically, residues 155–171 (QQRRQHPEMSLIWTLYR) are extracellular. The helical transmembrane segment at 172–192 (LFPLIISNFLNNCYFGAMVVV) threads the bilayer. At 193 to 260 (KEILYALNRR…HSGKYLTPMS (68 aa)) the chain is on the cytoplasmic side. A helical transmembrane segment spans residues 261 to 281 (LSMILSLICHLLGITVGFYSL). At 282 to 296 (YYAIADTLIMGKPYD) the chain is on the extracellular side. The helical transmembrane segment at 297-317 (GLGSLINLVFLSISLAEITLL) threads the bilayer. The Cytoplasmic portion of the chain corresponds to 318 to 376 (THLCNHLLVATRRSAVILQEMNLQHADSRYRQAVHGFTLLVTVTKYQIKPLGLYELDMR). A helical membrane pass occupies residues 377–397 (LISNVFSAVASFLLILVQADL). Over 398-404 (SQRFKMQ) the chain is Extracellular.

Belongs to the insect chemoreceptor superfamily. Gustatory receptor (GR) family. Gr22e subfamily. As to expression, in larvae, is expressed in neurons of the terminal external chemosensory organ.

Its subcellular location is the cell membrane. Functionally, probable gustatory receptor which mediates acceptance or avoidance behavior, depending on its substrates. The protein is Putative gustatory receptor 94a (Gr94a) of Drosophila melanogaster (Fruit fly).